A 292-amino-acid polypeptide reads, in one-letter code: Putative xanthine dehydrogenase FAD-binding subunit XdhB (292 aa).

The FAD-binding PCMH-type domain maps to 1 to 176 (MFDFASYHRA…VAFHFPPQPK (176 aa)). FAD-binding positions include 27-34 (KLLAGGTD), 109-113 (ATYGG), Ile165, and Phe184.

In terms of assembly, heterotrimer of XdhA, XdhB and XdhC. FAD serves as cofactor.

It carries out the reaction xanthine + NAD(+) + H2O = urate + NADH + H(+). It catalyses the reaction hypoxanthine + NAD(+) + H2O = xanthine + NADH + H(+). The protein operates within purine metabolism; hypoxanthine degradation; urate from hypoxanthine: step 1/2. It functions in the pathway purine metabolism; hypoxanthine degradation; urate from hypoxanthine: step 2/2. Functionally, presumed to be a dehydrogenase, but possibly an oxidase. Participates in limited purine salvage (requires aspartate) but does not support aerobic growth on purines as the sole carbon source (purine catabolism). This Escherichia coli (strain K12) protein is Putative xanthine dehydrogenase FAD-binding subunit XdhB (xdhB).